The sequence spans 293 residues: Meteorin (293 aa).

Residues M1–A23 form the signal peptide. Intrachain disulfides connect C30–C51, C82–C118, C171–C242, C174–C266, and C184–C288.

The protein belongs to the meteorin family. In terms of assembly, monomer.

It is found in the secreted. Its function is as follows. Involved in both glial cell differentiation and axonal network formation during neurogenesis. Promotes astrocyte differentiation and transforms cerebellar astrocytes into radial glia. Also induces axonal extension in small and intermediate neurons of sensory ganglia by activating nearby satellite glia. The chain is Meteorin (METRN) from Homo sapiens (Human).